A 358-amino-acid polypeptide reads, in one-letter code: COP9 signalosome complex subunit 5b (358 aa).

Residue methionine 1 is modified to N-acetylmethionine. Residues valine 59 to glycine 196 form the MPN domain. Zn(2+) is bound by residues histidine 142, histidine 144, and aspartate 155. The JAMM motif motif lies at histidine 142 to aspartate 155. Residues methionine 338–serine 349 are compositionally biased toward polar residues. Residues methionine 338–tyrosine 358 are disordered.

Belongs to the peptidase M67A family. CSN5 subfamily. As to quaternary structure, component of the CSN complex, probably composed of CSN1, CSN2, CSN3, CSN4, CSN5 (CSN5A or CSN5B), CSN6 (CSN6A or CSN6B), CSN7 and CSN8. CSN5A or CSN5B are present within distinct CSN complexes each containing only one copy of CSN5. Interacts with itself. In the complex, it is located in the center and probably interacts directly with CSN4 and CSN6A or CSN6B. Also exists as monomeric form. Interacts with CYT1 in vitro and in planta. Interacts with FLZ3. A divalent metal cation serves as cofactor. In terms of tissue distribution, ubiquitously expressed. Highly expressed in flowers and roots. Expressed at lower level in seedlings and siliques.

Its subcellular location is the cytoplasm. It localises to the nucleus. Functionally, probable protease subunit of the COP9 signalosome complex (CSN), a complex involved in various cellular and developmental processes such as photomorphogenesis and auxin and jasmonate responses. The CSN complex is an essential regulator of the ubiquitin (Ubl) conjugation pathway by mediating the deneddylation of the cullin subunits of the SCF-type E3 ligase complexes, leading to decrease the Ubl ligase activity of SCF. In the complex, it probably acts as the catalytic center that mediates the cleavage of Nedd8 from cullins. It however has no metalloprotease activity by itself and requires the other subunits of the CSN complex. The CSN complex is involved in repression of photomorphogenesis in darkness by regulating the activity of COP1-containing Ubl ligase complexes. The complex is also required for degradation of PSIAA6 by regulating the activity of the Ubl ligase SCF-TIR complex. Not involved in CSN's deneddylation/derubylation activity. Essential for the structural integrity of the CSN holocomplex. The protein is COP9 signalosome complex subunit 5b of Arabidopsis thaliana (Mouse-ear cress).